The chain runs to 89 residues: MTTSQKHRDFVAEPMGEKPVGSLAGIGEVLGKKLEERGFDKAYVVLGQFLVLKKDEDLFREWLKDTCGANAKQSRDCFGCLREWCDAFL.

An N-acetylmethionine modification is found at Met-1. Thr-2 carries the post-translational modification N-acetylthreonine; in Barrier-to-autointegration factor, N-terminally processed. A phosphothreonine; by VRK1 and VRK2 mark is found at Thr-2 and Thr-3. Ser-4 carries the phosphoserine; by VRK1 and VRK2 modification. Residues 20-35 (VGSLAGIGEVLGKKLE) enclose the HhH domain.

The protein belongs to the BAF family. As to quaternary structure, homodimer. Heterodimerizes with BANF2. Interacts with ANKLE2/LEM4, leading to decreased phosphorylation by VRK1 and promoting dephosphorylation by protein phosphatase 2A (PP2A). Binds non-specifically to double-stranded DNA, and is found as a hexamer or dodecamer upon DNA binding. Binds to LEM domain-containing nuclear proteins such as LEMD3/MAN1, TMPO/LAP2 and EMD (emerin). Interacts with ANKLE1 (via LEM domain); the interaction may favor BANF1 dimerization. Interacts with CRX and LMNA (lamin-A). Binds linker histone H1.1 and core histones H3. Interacts with LEMD2 (via LEM domain). Interacts with PARP1; interaction takes place in response to oxidative DNA damage. In terms of processing, ser-4 is the major site of phosphorylation as compared to Thr-2 and Thr-3. Phosphorylation on Thr-2; Thr-3 and Ser-4 disrupts its ability to bind DNA and reduces its ability to bind LEM domain-containing proteins. Non phosphorylated BAF seems to enhance binding between EMD and LMNA. Dephosphorylated by protein phosphatase 2A (PP2A) following interaction with ANKLE2/LEM4 during mitotic exit, leading to mitotic nuclear envelope reassembly.

It localises to the nucleus. Its subcellular location is the chromosome. It is found in the nucleus envelope. The protein localises to the cytoplasm. Non-specific DNA-binding protein that plays key roles in mitotic nuclear reassembly, chromatin organization, DNA damage response, gene expression and intrinsic immunity against foreign DNA. Contains two non-specific double-stranded DNA (dsDNA)-binding sites which promote DNA cross-bridging. Plays a key role in nuclear membrane reformation at the end of mitosis by driving formation of a single nucleus in a spindle-independent manner. Transiently cross-bridges anaphase chromosomes via its ability to bridge distant DNA sites, leading to the formation of a dense chromatin network at the chromosome ensemble surface that limits membranes to the surface. Also acts as a negative regulator of innate immune activation by restricting CGAS activity toward self-DNA upon acute loss of nuclear membrane integrity. Outcompetes CGAS for DNA-binding, thereby preventing CGAS activation and subsequent damaging autoinflammatory responses. Also involved in DNA damage response: interacts with PARP1 in response to oxidative stress, thereby inhibiting the ADP-ribosyltransferase activity of PARP1. Involved in the recognition of exogenous dsDNA in the cytosol: associates with exogenous dsDNA immediately after its appearance in the cytosol at endosome breakdown and is required to avoid autophagy. In case of poxvirus infection, has an antiviral activity by blocking viral DNA replication. The chain is Barrier-to-autointegration factor (BANF1) from Bos taurus (Bovine).